The chain runs to 419 residues: Tryptophan synthase beta chain (419 aa).

Lysine 98 carries the N6-(pyridoxal phosphate)lysine modification.

Belongs to the TrpB family. Tetramer of two alpha and two beta chains. The cofactor is pyridoxal 5'-phosphate.

It carries out the reaction (1S,2R)-1-C-(indol-3-yl)glycerol 3-phosphate + L-serine = D-glyceraldehyde 3-phosphate + L-tryptophan + H2O. The protein operates within amino-acid biosynthesis; L-tryptophan biosynthesis; L-tryptophan from chorismate: step 5/5. Its function is as follows. The beta subunit is responsible for the synthesis of L-tryptophan from indole and L-serine. The protein is Tryptophan synthase beta chain of Ruegeria sp. (strain TM1040) (Silicibacter sp.).